A 396-amino-acid chain; its full sequence is Acyl-[acyl-carrier-protein] desaturase, chloroplastic (396 aa).

A chloroplast-targeting transit peptide spans 1-33 (MALKFHPLTSQSPKLPSFRMPQLASLRSPKFVM). Fe cation is bound by residues Glu-138, Glu-176, His-179, Glu-229, Glu-262, and His-265.

Belongs to the fatty acid desaturase type 2 family. In terms of assembly, homodimer. It depends on Fe(2+) as a cofactor.

It localises to the plastid. Its subcellular location is the chloroplast. Its pathway is lipid metabolism; fatty acid metabolism. Introduces a cis double bond in the acyl chain of an acyl-[acyl-carrier protein]. The sequence is that of Acyl-[acyl-carrier-protein] desaturase, chloroplastic from Cucumis sativus (Cucumber).